A 2475-amino-acid polypeptide reads, in one-letter code: Non-reducing polyketide synthase prhL (2475 aa).

The segment at 14–253 (VLFGSKYSEI…HHADHLSAAQ (240 aa)) is N-terminal acylcarrier protein transacylase domain (SAT). Positions 384–800 (SIPIAVTGLA…GSNAAIVLKE (417 aa)) constitute a Ketosynthase family 3 (KS3) domain. Active-site for beta-ketoacyl synthase activity residues include C549, H684, and H723. The segment at 910-1212 (LCFGGQTGNK…CPMDLSGPQA (303 aa)) is malonyl-CoA:ACP transacylase (MAT) domain. The active-site For acyl/malonyl transferase activity is S997. The interval 1279 to 1407 (EGLKLVQLLK…GTISLSPGAN (129 aa)) is N-terminal hotdog fold. The 308-residue stretch at 1279 to 1586 (EGLKLVQLLK…FTSVSIQSLR (308 aa)) folds into the PKS/mFAS DH domain. The segment at 1282–1585 (KLVQLLKNEG…TFTSVSIQSL (304 aa)) is product template (PT) domain. H1312 acts as the Proton acceptor; for dehydratase activity in catalysis. Residues 1435-1586 (SSSGLKRSTV…FTSVSIQSLR (152 aa)) are C-terminal hotdog fold. The active-site Proton donor; for dehydratase activity is the D1493. The 78-residue stretch at 1626-1703 (SSNGDDLRTV…ALVQRIFPGR (78 aa)) folds into the Carrier domain. Position 1663 is an O-(pantetheine 4'-phosphoryl)serine (S1663). A methyltransferase (CMeT) domain region spans residues 1865-2098 (HHTSEHKLLH…GFNWVDWTDN (234 aa)). The segment at 2127-2475 (SDIHEETVVY…YEFLRSHVRL (349 aa)) is thioesterase (TE) domain. Active-site for thioesterase activity residues include S2250 and D2412.

It carries out the reaction 3 malonyl-CoA + acetyl-CoA + 2 S-adenosyl-L-methionine = 3,5-dimethylorsellinate + 2 S-adenosyl-L-homocysteine + 3 CO2 + 4 CoA. The protein operates within secondary metabolite biosynthesis; terpenoid biosynthesis. Functionally, non-reducing polyketide synthase; part of the gene cluster that mediates the biosynthesis of paraherquonin, a meroterpenoid with a unique, highly congested hexacyclic molecular architecture. The first step of the pathway is the synthesis of 3,5-dimethylorsellinic acid (DMOA) by the polyketide synthase prhL. Synthesis of DMOA is followed by farnesylation by the prenyltransferase prhE, methylesterification by the methyl-transferase prhM, epoxidation of the prenyl chain by the flavin-dependent monooxygenase prhF, and cyclization of the farnesyl moiety by the terpene cyclase prhH, to yield the tetracyclic intermediate, protoaustinoid A. The short chain dehydrogenase prhI then oxidizes the C-3 alcohol group of the terpene cyclase product to transform protoaustinoid A into protoaustinoid B. The FAD-binding monooxygenase prhJ catalyzes the oxidation of protoaustinoid B into preaustinoid A which is further oxidized into preaustinoid A1 by FAD-binding monooxygenase phrK. Finally, prhA leads to berkeleydione via the berkeleyone B intermediate. PrhA is a multifunctional dioxygenase that first desaturates at C5-C6 to form berkeleyone B, followed by rearrangement of the A/B-ring to form the cycloheptadiene moiety in berkeleydione. Berkeleydione serves as the key intermediate for the biosynthesis of paraherquonin as well as many other meroterpenoids. The cytochrome P450 monooxygenases prhB, prhD, and prhN, as well as the isomerase prhC, are probably involved in the late stage of paraherquonin biosynthesis, after the production of berkeleydione. Especially prhC might be a multifunctional enzyme that catalyzes the D-ring expansion via intramolecular methoxy rearrangement, as well as the hydrolysis of the expanded D-ring. This Penicillium brasilianum protein is Non-reducing polyketide synthase prhL.